We begin with the raw amino-acid sequence, 289 residues long: Thioredoxin-like protein 1 (289 aa).

The region spanning 2 to 109 (VGVKPVGSDP…EEKIKQHLEN (108 aa)) is the Thioredoxin domain. A disulfide bridge connects residues C34 and C37. S113 bears the Phosphoserine mark. The PITH domain occupies 115–285 (EDTDIPKGYM…NDFKRVVGKK (171 aa)).

Component of the 19S regulatory cap of the 26S proteasome. Interacts with PSMD14/RPN11. Interacts with, and reduces EEF1A1. Ubiquitous.

It is found in the cytoplasm. The protein localises to the nucleus. Active thioredoxin with a redox potential of about -250 mV. This is Thioredoxin-like protein 1 (TXNL1) from Homo sapiens (Human).